A 413-amino-acid polypeptide reads, in one-letter code: Arginine biosynthesis bifunctional protein ArgJ (413 aa).

Positions 160, 186, 197, 284, 408, and 413 each coordinate substrate. The Nucleophile role is filled by Thr-197.

This sequence belongs to the ArgJ family. Heterotetramer of two alpha and two beta chains.

Its subcellular location is the cytoplasm. It catalyses the reaction N(2)-acetyl-L-ornithine + L-glutamate = N-acetyl-L-glutamate + L-ornithine. The enzyme catalyses L-glutamate + acetyl-CoA = N-acetyl-L-glutamate + CoA + H(+). It functions in the pathway amino-acid biosynthesis; L-arginine biosynthesis; L-ornithine and N-acetyl-L-glutamate from L-glutamate and N(2)-acetyl-L-ornithine (cyclic): step 1/1. The protein operates within amino-acid biosynthesis; L-arginine biosynthesis; N(2)-acetyl-L-ornithine from L-glutamate: step 1/4. Its function is as follows. Catalyzes two activities which are involved in the cyclic version of arginine biosynthesis: the synthesis of N-acetylglutamate from glutamate and acetyl-CoA as the acetyl donor, and of ornithine by transacetylation between N(2)-acetylornithine and glutamate. The chain is Arginine biosynthesis bifunctional protein ArgJ from Burkholderia mallei (strain ATCC 23344).